A 765-amino-acid chain; its full sequence is AMP deaminase 3 (765 aa).

Phosphoserine is present on residues Ser85 and Ser106. His315 and His317 together coordinate Zn(2+). Substrate contacts are provided by residues His317 and 386–391 (KFNSKY). His584 provides a ligand contact to Zn(2+). Glu587 contributes to the substrate binding site. Residue His606 is the Proton acceptor of the active site. Asp661 provides a ligand contact to Zn(2+). Substrate is bound at residue 662–665 (DPMQ).

This sequence belongs to the metallo-dependent hydrolases superfamily. Adenosine and AMP deaminases family. As to quaternary structure, homotetramer. Zn(2+) serves as cofactor. As to expression, expressed in adult tissues such as aorta, heart, kidney, lung, muscle and thyroid. Weakly expressed in thyroid and not detected in liver.

The enzyme catalyses AMP + H2O + H(+) = IMP + NH4(+). The protein operates within purine metabolism; IMP biosynthesis via salvage pathway; IMP from AMP: step 1/1. In terms of biological role, AMP deaminase plays a critical role in energy metabolism. The protein is AMP deaminase 3 of Rattus norvegicus (Rat).